Reading from the N-terminus, the 28-residue chain is MSLILIFFAFTVLKSSKWICANRSVCPI.

An N-terminal signal peptide occupies residues 1 to 15; it reads MSLILIFFAFTVLKS. The cysteines at positions 20 and 26 are disulfide-linked.

In terms of assembly, monomer in solution. Post-translationally, may be N-glycosylated at Asn-22. Activity with this modification has not be tested. In terms of tissue distribution, highly expressed in the tentacles. Weakly expressed in acrorhagi and mesenteric filaments.

The protein resides in the secreted. It localises to the nematocyst. In terms of biological role, probable toxin expected to be employed in prey capture and/or defense against predators (based on its abundance in tentacles). Has only a weak affinity for lipid membranes. Shows moderate cytotoxic activity against breast cancer cell lines (MCF-7 and MDA-MB-231). The polypeptide is U-actitoxin-Ate1 (Actinia tenebrosa (Australian red waratah sea anemone)).